The primary structure comprises 140 residues: Probable NADH dehydrogenase [ubiquinone] iron-sulfur protein 6, mitochondrial (140 aa).

Belongs to the complex I NDUFS6 subunit family. In terms of assembly, complex I is composed of 45 different subunits. This is a component of the iron-sulfur (IP) fragment of the enzyme.

The protein resides in the mitochondrion inner membrane. Accessory subunit of the mitochondrial membrane respiratory chain NADH dehydrogenase (Complex I), that is believed not to be involved in catalysis. Complex I functions in the transfer of electrons from NADH to the respiratory chain. The immediate electron acceptor for the enzyme is believed to be ubiquinone. The polypeptide is Probable NADH dehydrogenase [ubiquinone] iron-sulfur protein 6, mitochondrial (nduf-6) (Caenorhabditis elegans).